The sequence spans 349 residues: uncharacterized protein (349 aa).

An N-terminal signal peptide occupies residues 1-26; it reads MQSHAGGSRAPLGLLLICLCLPGLFA. Disordered regions lie at residues 30 to 113 and 322 to 349; these read GAPE…QGMA and YPAGSWGTKGQNRLPPGAKRPGSSGITP. A compositionally biased stretch (polar residues) spans 39–52; that stretch reads HSGQPSFTSLLNPG. Residues 90 to 101 show a composition bias toward pro residues; it reads NGPPFWGPPPME.

As to quaternary structure, binds to numerous extracellular matrix proteins.

The protein resides in the secreted. The protein localises to the extracellular space. Its subcellular location is the extracellular matrix. This is an uncharacterized protein from Mus musculus (Mouse).